Here is a 189-residue protein sequence, read N- to C-terminus: Putative manganese efflux pump MntP (189 aa).

The next 6 membrane-spanning stretches (helical) occupy residues 3-23 (PVSL…AAIG), 41-61 (IIFG…GQAA), 65-85 (VADW…LHMI), 106-128 (WILA…GLAF), 141-161 (GLAT…LGAV), and 168-188 (MVGG…HLSA).

This sequence belongs to the MntP (TC 9.B.29) family.

It is found in the cell inner membrane. Functionally, probably functions as a manganese efflux pump. This chain is Putative manganese efflux pump MntP, found in Pseudomonas aeruginosa (strain UCBPP-PA14).